The chain runs to 164 residues: UPF0251 protein MA_0157 (164 aa).

The tract at residues 91–124 (GDYRMPRGDGTGPAGQGPVGGGRSRGQGKGRGGR) is disordered. Positions 99 to 115 (DGTGPAGQGPVGGGRSR) are enriched in gly residues.

It belongs to the UPF0251 family.

In Methanosarcina acetivorans (strain ATCC 35395 / DSM 2834 / JCM 12185 / C2A), this protein is UPF0251 protein MA_0157.